The sequence spans 245 residues: High affinity immunoglobulin epsilon receptor subunit alpha (245 aa).

A signal peptide spans 1–23; that stretch reads MDTGGSARLCLALVLISLGVMLT. Over 24–204 the chain is Extracellular; sequence ATQKSVVSLD…DYTIEYRWLQ (181 aa). Ig-like domains lie at 28 to 103 and 113 to 181; these read SVVS…KPVY and LQSS…LNKV. A disulfide bridge links C49 with C91. N-linked (GlcNAc...) asparagine glycosylation is found at N52, N53, N58, N65, N123, N158, and N167. The cysteines at positions 130 and 174 are disulfide-linked. Residues 205-223 form a helical membrane-spanning segment; that stretch reads LIFPSLAVILFAVDTGLWF. Over 224 to 245 the chain is Cytoplasmic; that stretch reads STHKQFESILKIQKTGKGKKKG.

In terms of assembly, tetramer of an alpha chain, a beta chain, and two disulfide linked gamma chains. Interacts with IGHE (via CH3 region). In terms of tissue distribution, expressed in leukocytes and pinealocytes at night (at protein level).

The protein localises to the cell membrane. It localises to the secreted. Functionally, high-affinity receptor for immunoglobulin epsilon/IgE. Mediates IgE effector functions in myeloid cells. Upon IgE binding and antigen/allergen cross-linking initiates signaling pathways that lead to myeloid cell activation and differentiation. On mast cells, basophils and eosinophils stimulates the secretion of vasoactive amines, lipid mediators and cytokines that contribute to inflammatory response, tissue remodeling and cytotoxicity against microbes. Triggers the immediate hypersensitivity response to allergens as a host defense mechanism against helminth parasites, pathogenic bacteria and venom toxicity. When dysregulated, it can elicit harmful life-threatening allergic and anaphylactic reactions. The protein is High affinity immunoglobulin epsilon receptor subunit alpha (Fcer1a) of Rattus norvegicus (Rat).